The chain runs to 387 residues: MIEDHLNTELAEIASAGLTRRRRVLETPCGRMATVDGTNLLNFASNDYLGLAGNADIARVLADGALQWGAGSGASHLVSGHLGPHELLEKEIAEFTGFPRTLTFSTGYLANLAVTPTLAGRGDAVFADKLNHASLIDAMQLAKANGAEVQRYPHNDVAALEKMLAASTAAHKIIVTDAVFSMDGDLAPLPLIFALAERYDAWLVIDDAHGFGVLGPHGEGSLGHFNLPASPRILLMGTLGKAAGVGGAFVAGSETAIEYLLQKGRSYIFTTAQPPAIACALAKSLQLIRDGDALRANLMDRIGQLRDGLAGLPMKLLPSPTAIQPLIVGDNDAAVALSKALWERGLWVPAIRPPTVPKGTARLRISVSAAHTEADIAQLIAALKELA.

Arginine 20 is a substrate binding site. 107 to 108 (GY) serves as a coordination point for pyridoxal 5'-phosphate. Histidine 132 serves as a coordination point for substrate. The pyridoxal 5'-phosphate site is built by serine 181, histidine 209, and threonine 238. Lysine 241 carries the N6-(pyridoxal phosphate)lysine modification. Threonine 355 is a substrate binding site.

It belongs to the class-II pyridoxal-phosphate-dependent aminotransferase family. BioF subfamily. In terms of assembly, homodimer. Requires pyridoxal 5'-phosphate as cofactor.

The catalysed reaction is 6-carboxyhexanoyl-[ACP] + L-alanine + H(+) = (8S)-8-amino-7-oxononanoate + holo-[ACP] + CO2. It participates in cofactor biosynthesis; biotin biosynthesis. In terms of biological role, catalyzes the decarboxylative condensation of pimeloyl-[acyl-carrier protein] and L-alanine to produce 8-amino-7-oxononanoate (AON), [acyl-carrier protein], and carbon dioxide. This chain is 8-amino-7-oxononanoate synthase, found in Dechloromonas aromatica (strain RCB).